Here is a 294-residue protein sequence, read N- to C-terminus: HTH-type transcriptional regulator XapR (294 aa).

Residues 7–64 (TDLKLLRYFLAVAEELHFGRAAARLNMSQPPLSIHIKELENQLGTQLFIRHSRSVVLT) form the HTH lysR-type domain. Positions 24 to 43 (FGRAAARLNMSQPPLSIHIK) form a DNA-binding region, H-T-H motif.

This sequence belongs to the LysR transcriptional regulatory family.

Positive regulator required for the expression of xapA and xapB. Binds to the inducer xanthosine. This is HTH-type transcriptional regulator XapR (xapR) from Escherichia coli (strain K12).